The primary structure comprises 255 residues: MAKESIQAIKEALLTVTDATDERLASWREDERSGVQQAIKQWERRQLAKEKEWQLFKEMSQFEEAAYKKGHRLIAGIDEVGRGPLAGPVVTAAVILPKDCQLLGLNDSKKLSAKKRETLYNQIQEQAVAIGLGIADQGVIDQINIYQATKQAMKMAIDDLAFTPDYLLIDAMQLDVPQPQESLIKGDARSISIAAASIIAKVTRDRLMEEYDELYPGYGFKNNAGYGTKEHLLGLEKYGVTPIHRRTFAPIKDMI.

One can recognise an RNase H type-2 domain in the interval 72 to 255 (RLIAGIDEVG…RTFAPIKDMI (184 aa)). Residues Asp78, Glu79, and Asp170 each contribute to the a divalent metal cation site.

This sequence belongs to the RNase HII family. Mn(2+) is required as a cofactor. Mg(2+) serves as cofactor.

It is found in the cytoplasm. It carries out the reaction Endonucleolytic cleavage to 5'-phosphomonoester.. In terms of biological role, endonuclease that specifically degrades the RNA of RNA-DNA hybrids. The polypeptide is Ribonuclease HII (Enterococcus faecalis (strain ATCC 700802 / V583)).